The sequence spans 533 residues: CTP synthase (533 aa).

The amidoligase domain stretch occupies residues 1 to 268 (MGETKYIFVT…DETILQKMGL (268 aa)). S15 is a CTP binding site. S15 lines the UTP pocket. 16–21 (SLGKGI) serves as a coordination point for ATP. Y56 serves as a coordination point for L-glutamine. D73 contacts ATP. The Mg(2+) site is built by D73 and E143. CTP contacts are provided by residues 150 to 152 (DIE), 189 to 194 (KTKPTQ), and K225. UTP is bound by residues 189 to 194 (KTKPTQ) and K225. A Glutamine amidotransferase type-1 domain is found at 301 to 533 (YVELQDAYKS…VSFIKAAIDK (233 aa)). G356 contacts L-glutamine. C383 serves as the catalytic Nucleophile; for glutamine hydrolysis. L-glutamine is bound by residues 384–387 (LGMQ), E407, and R464. Residues H509 and E511 contribute to the active site.

The protein belongs to the CTP synthase family. In terms of assembly, homotetramer.

It carries out the reaction UTP + L-glutamine + ATP + H2O = CTP + L-glutamate + ADP + phosphate + 2 H(+). It catalyses the reaction L-glutamine + H2O = L-glutamate + NH4(+). The catalysed reaction is UTP + NH4(+) + ATP = CTP + ADP + phosphate + 2 H(+). It participates in pyrimidine metabolism; CTP biosynthesis via de novo pathway; CTP from UDP: step 2/2. With respect to regulation, allosterically activated by GTP, when glutamine is the substrate; GTP has no effect on the reaction when ammonia is the substrate. The allosteric effector GTP functions by stabilizing the protein conformation that binds the tetrahedral intermediate(s) formed during glutamine hydrolysis. Inhibited by the product CTP, via allosteric rather than competitive inhibition. Catalyzes the ATP-dependent amination of UTP to CTP with either L-glutamine or ammonia as the source of nitrogen. Regulates intracellular CTP levels through interactions with the four ribonucleotide triphosphates. The polypeptide is CTP synthase (Bacteroides fragilis (strain YCH46)).